Consider the following 353-residue polypeptide: Photosystem II protein D1 (353 aa).

N-acetylthreonine is present on threonine 2. Threonine 2 carries the post-translational modification Phosphothreonine. A run of 3 helical transmembrane segments spans residues 29-46, 118-133, and 142-156; these read YIGWFGVLMIPTLLTATS, HFLLGVACYMGREWEL, and WIAVAYSAPVAAATA. Chlorophyll a is bound at residue histidine 118. Tyrosine 126 provides a ligand contact to pheophytin a. Residues aspartate 170 and glutamate 189 each coordinate [CaMn4O5] cluster. A helical transmembrane segment spans residues 197–218; it reads FHMLGVAGVFGGSLFSAMHGSL. Histidine 198 serves as a coordination point for chlorophyll a. Residues histidine 215 and 264 to 265 each bind a quinone; that span reads SF. Histidine 215 serves as a coordination point for Fe cation. Histidine 272 serves as a coordination point for Fe cation. Residues 274-288 traverse the membrane as a helical segment; the sequence is FLAAWPVVGIWFTAL. The [CaMn4O5] cluster site is built by histidine 332, glutamate 333, aspartate 342, and alanine 344. Positions 345–353 are excised as a propeptide; the sequence is AVEAPAVNG.

It belongs to the reaction center PufL/M/PsbA/D family. PSII is composed of 1 copy each of membrane proteins PsbA, PsbB, PsbC, PsbD, PsbE, PsbF, PsbH, PsbI, PsbJ, PsbK, PsbL, PsbM, PsbT, PsbX, PsbY, PsbZ, Psb30/Ycf12, at least 3 peripheral proteins of the oxygen-evolving complex and a large number of cofactors. It forms dimeric complexes. The D1/D2 heterodimer binds P680, chlorophylls that are the primary electron donor of PSII, and subsequent electron acceptors. It shares a non-heme iron and each subunit binds pheophytin, quinone, additional chlorophylls, carotenoids and lipids. D1 provides most of the ligands for the Mn4-Ca-O5 cluster of the oxygen-evolving complex (OEC). There is also a Cl(-1) ion associated with D1 and D2, which is required for oxygen evolution. The PSII complex binds additional chlorophylls, carotenoids and specific lipids. serves as cofactor. In terms of processing, tyr-161 forms a radical intermediate that is referred to as redox-active TyrZ, YZ or Y-Z. Post-translationally, C-terminally processed by CTPA; processing is essential to allow assembly of the oxygen-evolving complex and thus photosynthetic growth.

It is found in the plastid. The protein localises to the chloroplast thylakoid membrane. The enzyme catalyses 2 a plastoquinone + 4 hnu + 2 H2O = 2 a plastoquinol + O2. Its function is as follows. Photosystem II (PSII) is a light-driven water:plastoquinone oxidoreductase that uses light energy to abstract electrons from H(2)O, generating O(2) and a proton gradient subsequently used for ATP formation. It consists of a core antenna complex that captures photons, and an electron transfer chain that converts photonic excitation into a charge separation. The D1/D2 (PsbA/PsbD) reaction center heterodimer binds P680, the primary electron donor of PSII as well as several subsequent electron acceptors. The chain is Photosystem II protein D1 from Conocephalum conicum (Snakeskin liverwort).